The primary structure comprises 280 residues: Virginiamycin B lyase (280 aa).

H215 provides a ligand contact to substrate. E254 is a binding site for Mg(2+). The active-site Proton acceptor is the H256. A Mg(2+)-binding site is contributed by E271.

Belongs to the Vgb family. In terms of assembly, monomer. The cofactor is Mg(2+).

Its function is as follows. Inactivates the type B streptogramin antibiotics by linearizing the lactone ring at the ester linkage, generating a free phenylglycine carboxylate and converting the threonyl moiety into 2-amino-butenoic acid. The protein is Virginiamycin B lyase of Mycobacterium sp. (strain JLS).